Consider the following 176-residue polypeptide: Probable inosine/xanthosine triphosphatase (176 aa).

D36 lines the Mg(2+) pocket.

Belongs to the YjjX NTPase family. As to quaternary structure, homodimer. Mg(2+) serves as cofactor. It depends on Mn(2+) as a cofactor.

The enzyme catalyses XTP + H2O = XDP + phosphate + H(+). It catalyses the reaction ITP + H2O = IDP + phosphate + H(+). Phosphatase that hydrolyzes non-canonical purine nucleotides such as XTP and ITP to their respective diphosphate derivatives. Probably excludes non-canonical purines from DNA/RNA precursor pool, thus preventing their incorporation into DNA/RNA and avoiding chromosomal lesions. The protein is Probable inosine/xanthosine triphosphatase of Saccharolobus islandicus (strain Y.G.57.14 / Yellowstone #1) (Sulfolobus islandicus).